The sequence spans 163 residues: Epithelial membrane protein 3 (163 aa).

The chain crosses the membrane as a helical span at residues 4–24; the sequence is LLLVVSALHILILVLLFVATL. N-linked (GlcNAc...) asparagine glycans are attached at residues Asn46 and Asn56. The next 3 membrane-spanning stretches (helical) occupy residues 66–86, 100–120, and 139–159; these read VQALMVLSLILCCLSFILFMI, TGLCQLCTSAAVFSGALIYAI, and FALAWVAFPLALVSGIIYIHL.

The protein belongs to the PMP-22/EMP/MP20 family.

It localises to the membrane. Probably involved in cell proliferation and cell-cell interactions. This chain is Epithelial membrane protein 3 (Emp3), found in Rattus norvegicus (Rat).